The following is a 546-amino-acid chain: Thermolysin (546 aa).

An N-terminal signal peptide occupies residues 1–25; the sequence is MDKRAMLGAIGLAFGLMAWPFGASA. Residues 26-228 constitute a propeptide, activation peptide; sequence KEKSMVWNEQ…EAKPGGGQPV (203 aa). 4 residues coordinate Ca(2+): Asp-287, Asp-289, Gln-291, and Asp-368. His-372 lines the Zn(2+) pocket. The active site involves Glu-373. 2 residues coordinate Zn(2+): His-376 and Glu-396. Ca(2+)-binding residues include Asn-413, Asp-415, Glu-417, Glu-420, Tyr-423, Thr-424, Ile-427, and Asp-430. His-461 (proton donor) is an active-site residue.

It belongs to the peptidase M4 family. It depends on Ca(2+) as a cofactor. The cofactor is Zn(2+).

It is found in the secreted. It catalyses the reaction Preferential cleavage: Xaa-|-Leu &gt; Xaa-|-Phe.. Extracellular zinc metalloprotease. The polypeptide is Thermolysin (npr) (Bacillus caldolyticus).